Reading from the N-terminus, the 410-residue chain is Serine hydroxymethyltransferase (410 aa).

(6S)-5,6,7,8-tetrahydrofolate-binding positions include L119 and 123 to 125 (GHL). K228 carries the post-translational modification N6-(pyridoxal phosphate)lysine. Residue 351 to 353 (SPF) participates in (6S)-5,6,7,8-tetrahydrofolate binding.

It belongs to the SHMT family. As to quaternary structure, homodimer. The cofactor is pyridoxal 5'-phosphate.

It localises to the cytoplasm. The catalysed reaction is (6R)-5,10-methylene-5,6,7,8-tetrahydrofolate + glycine + H2O = (6S)-5,6,7,8-tetrahydrofolate + L-serine. It participates in one-carbon metabolism; tetrahydrofolate interconversion. Its pathway is amino-acid biosynthesis; glycine biosynthesis; glycine from L-serine: step 1/1. In terms of biological role, catalyzes the reversible interconversion of serine and glycine with tetrahydrofolate (THF) serving as the one-carbon carrier. This reaction serves as the major source of one-carbon groups required for the biosynthesis of purines, thymidylate, methionine, and other important biomolecules. Also exhibits THF-independent aldolase activity toward beta-hydroxyamino acids, producing glycine and aldehydes, via a retro-aldol mechanism. This is Serine hydroxymethyltransferase from Alkaliphilus oremlandii (strain OhILAs) (Clostridium oremlandii (strain OhILAs)).